A 206-amino-acid polypeptide reads, in one-letter code: High frequency lysogenization protein HflD homolog (206 aa).

It belongs to the HflD family.

Its subcellular location is the cytoplasm. The protein resides in the cell inner membrane. This is High frequency lysogenization protein HflD homolog from Pseudomonas syringae pv. syringae (strain B728a).